A 586-amino-acid polypeptide reads, in one-letter code: CTP synthase (586 aa).

Residues 1–278 (MRKHPQTATK…DAFVVRRLNL (278 aa)) form an amidoligase domain region. Ser20 lines the CTP pocket. Ser20 is a UTP binding site. Residues 21–26 (SLGKGL) and Asp78 each bind ATP. 2 residues coordinate Mg(2+): Asp78 and Glu152. CTP contacts are provided by residues 159–161 (DIE), 199–204 (KTKPTQ), and Lys235. Residues 199-204 (KTKPTQ) and Lys235 each bind UTP. The region spanning 303–551 (RIALVGKYVE…VGAAIDYKAG (249 aa)) is the Glutamine amidotransferase type-1 domain. Position 366 (Gly366) interacts with L-glutamine. The Nucleophile; for glutamine hydrolysis role is filled by Cys393. Residues 394 to 397 (LGLQ), Glu416, and Arg477 each bind L-glutamine. Catalysis depends on residues His524 and Glu526. The segment at 560 to 586 (EIPEHTPNGSSHRDGVGQPLPEPASRG) is disordered.

Belongs to the CTP synthase family. In terms of assembly, homotetramer.

It carries out the reaction UTP + L-glutamine + ATP + H2O = CTP + L-glutamate + ADP + phosphate + 2 H(+). The enzyme catalyses L-glutamine + H2O = L-glutamate + NH4(+). It catalyses the reaction UTP + NH4(+) + ATP = CTP + ADP + phosphate + 2 H(+). Its pathway is pyrimidine metabolism; CTP biosynthesis via de novo pathway; CTP from UDP: step 2/2. Its activity is regulated as follows. Allosterically activated by GTP, when glutamine is the substrate; GTP has no effect on the reaction when ammonia is the substrate. The allosteric effector GTP functions by stabilizing the protein conformation that binds the tetrahedral intermediate(s) formed during glutamine hydrolysis. Inhibited by the product CTP, via allosteric rather than competitive inhibition. In terms of biological role, catalyzes the ATP-dependent amination of UTP to CTP with either L-glutamine or ammonia as the source of nitrogen. Regulates intracellular CTP levels through interactions with the four ribonucleotide triphosphates. This chain is CTP synthase, found in Mycobacterium tuberculosis (strain CDC 1551 / Oshkosh).